A 102-amino-acid polypeptide reads, in one-letter code: Probable endoribonuclease MazF2 (102 aa).

The protein belongs to the PemK/MazF family. In terms of assembly, forms a complex with cognate antitoxin MazE2.

Toxic component of a type II toxin-antitoxin (TA) system. Acts as an endoribonuclease. Neutralized by coexpression with cognate antitoxin MazE2. This is Probable endoribonuclease MazF2 (mazF2) from Mycobacterium tuberculosis (strain CDC 1551 / Oshkosh).